Consider the following 289-residue polypeptide: Agmatinase (289 aa).

Mn(2+) contacts are provided by H112, D135, H137, D139, D216, and D218.

The protein belongs to the arginase family. Agmatinase subfamily. Requires Mn(2+) as cofactor.

It carries out the reaction agmatine + H2O = urea + putrescine. It functions in the pathway amine and polyamine biosynthesis; putrescine biosynthesis via agmatine pathway; putrescine from agmatine: step 1/1. Functionally, catalyzes the formation of putrescine from agmatine. The protein is Agmatinase (speB) of Halalkalibacterium halodurans (strain ATCC BAA-125 / DSM 18197 / FERM 7344 / JCM 9153 / C-125) (Bacillus halodurans).